An 80-amino-acid chain; its full sequence is Cytochrome c oxidase subunit 7A1, mitochondrial (80 aa).

The N-terminal 21 residues, 1-21 (MLAPRVSQALIRSFSSTARNR), are a transit peptide targeting the mitochondrion. The Mitochondrial matrix portion of the chain corresponds to 22–46 (LKNRVPEKQKLFQEDNGIPVYLKGG). A helical transmembrane segment spans residues 47-75 (VVDHILYRVTMGLCLGGTAYGVYCLAWAS). Residues 76–80 (FPRNK) lie on the Mitochondrial intermembrane side of the membrane.

This sequence belongs to the cytochrome c oxidase VIIa family. As to quaternary structure, component of the complex IV (CIV, cytochrome c oxidase), a multisubunit enzyme composed of 14 subunits. The complex is composed of a catalytic core of 3 subunits MT-CO1, MT-CO2 and MT-CO3, encoded in the mitochondrial DNA, and 11 supernumerary subunits COX4I1 (or COX4I2), COX5A, COX5B, COX6A2 (or COX6A1), COX6B1 (or COX6B2), COX6C, COX7A1 (or COX7A2), COX7B, COX7C, COX8B and NDUFA4, which are encoded in the nuclear genome. The complex exists as a monomer or a dimer and forms supercomplexes (SCs) in the inner mitochondrial membrane with NADH-ubiquinone oxidoreductase (complex I, CI) and ubiquinol-cytochrome c oxidoreductase (cytochrome b-c1 complex, complex III, CIII), resulting in different assemblies (supercomplex SCI(1)III(2)IV(1) and megacomplex MCI(2)III(2)IV(2)).

It localises to the mitochondrion inner membrane. It functions in the pathway energy metabolism; oxidative phosphorylation. In terms of biological role, component of the mitochondrial respiratory complex IV (CIV, also named cytochrome c oxidase complex), the last enzyme in the mitochondrial electron transport chain which drives oxidative phosphorylation. The CIV complex is the component of the respiratory chain that catalyzes the reduction of oxygen to water. Acts as an assembly factor that specifically drives the homodimerization of CIV complexes, mediating the formation of mitochondrial respiratory supercomplexes (respirasomes) containing two CIV: supercomplxes with two molecules of CIV show improved activity. Despite being highly expressed in brown adipose tissue, not required for thermogenesis. The chain is Cytochrome c oxidase subunit 7A1, mitochondrial (COX7A1) from Saimiri sciureus (Common squirrel monkey).